The chain runs to 185 residues: GTP-binding protein rhb1 (185 aa).

Ser-16, Gly-18, Lys-19, Ser-20, Ser-21, Val-32, Tyr-35, Thr-38, Asn-119, Asp-122, and Ala-150 together coordinate GTP. A Mg(2+)-binding site is contributed by Ser-20. Positions 35–43 match the Effector region motif; sequence YYPTIENTF. Residue Thr-38 participates in Mg(2+) binding. Position 182 is a cysteine methyl ester (Cys-182). The S-farnesyl cysteine moiety is linked to residue Cys-182. Residues 183–185 constitute a propeptide, removed in mature form; the sequence is VIA.

Belongs to the small GTPase superfamily. Rheb family.

The protein resides in the cell membrane. It catalyses the reaction GTP + H2O = GDP + phosphate + H(+). Binds GTP and exhibits intrinsic GTPase activity. Regulates entry into stationary phase when extracellular nitrogen levels are adequate for growth. The polypeptide is GTP-binding protein rhb1 (rhb1) (Schizosaccharomyces pombe (strain 972 / ATCC 24843) (Fission yeast)).